The primary structure comprises 296 residues: Phosphoribosylaminoimidazole-succinocarboxamide synthase (296 aa).

This sequence belongs to the SAICAR synthetase family.

The catalysed reaction is 5-amino-1-(5-phospho-D-ribosyl)imidazole-4-carboxylate + L-aspartate + ATP = (2S)-2-[5-amino-1-(5-phospho-beta-D-ribosyl)imidazole-4-carboxamido]succinate + ADP + phosphate + 2 H(+). It functions in the pathway purine metabolism; IMP biosynthesis via de novo pathway; 5-amino-1-(5-phospho-D-ribosyl)imidazole-4-carboxamide from 5-amino-1-(5-phospho-D-ribosyl)imidazole-4-carboxylate: step 1/2. The polypeptide is Phosphoribosylaminoimidazole-succinocarboxamide synthase (Syntrophotalea carbinolica (strain DSM 2380 / NBRC 103641 / GraBd1) (Pelobacter carbinolicus)).